Consider the following 317-residue polypeptide: Apolipoprotein E (317 aa).

A signal peptide spans 1–18 (MKVLWAALLVTFLAGCQA). Tandem repeats lie at residues 80–101 (TLMDETMKELKAYKSDLEEQLS), 102–123 (PVAEETRARLSKELQAAQARLG), 124–145 (ADMEDVRSRLVQYRGEVQAMLG), 146–167 (QSTEELRARLASHLRKLRKRLL), 168–189 (RDADDLQKRLAVYQAGAREGAE), 190–211 (RGVSAIRERLGPLVEQGRVRAA), 212–233 (TVGSLAGQPLQERAQAWGERLR), and 234–255 (ARMEEVGSRTRDRLDEVKEQVA). The 8 X 22 AA approximate tandem repeats stretch occupies residues 80–255 (TLMDETMKEL…RLDEVKEQVA (176 aa)). Met143 is subject to Methionine sulfoxide. Ser147 carries the post-translational modification Phosphoserine. Residues 158 to 168 (HLRKLRKRLLR) form an LDL and other lipoprotein receptors binding region. Heparin is bound at residue 162–165 (LRKR). Residues 210–290 (AATVGSLAGQ…SWFEPLVEDM (81 aa)) are lipid-binding and lipoprotein association. Residue 229-236 (GERLRARM) coordinates heparin. A homooligomerization region spans residues 266–317 (QQISLQAEAFQARLKSWFEPLVEDMQRQWAGLVEKVQAAVGASTAPVPSDNH). Positions 278–290 (RLKSWFEPLVEDM) are specificity for association with VLDL.

It belongs to the apolipoprotein A1/A4/E family. In terms of assembly, homotetramer. May interact with ABCA1; functionally associated with ABCA1 in the biogenesis of HDLs. May interact with APP/A4 amyloid-beta peptide; the interaction is extremely stable in vitro but its physiological significance is unclear. May interact with MAPT. May interact with MAP2. In the cerebrospinal fluid, interacts with secreted SORL1. Interacts with PMEL; this allows the loading of PMEL luminal fragment on ILVs to induce fibril nucleation. Post-translationally, APOE exists as multiple glycosylated and sialylated glycoforms within cells and in plasma. The extent of glycosylation and sialylation are tissue and context specific. In terms of processing, glycated in plasma VLDL. Phosphorylated by FAM20C in the extracellular medium.

Its subcellular location is the secreted. The protein resides in the extracellular space. It localises to the extracellular matrix. The protein localises to the extracellular vesicle. It is found in the endosome. Its subcellular location is the multivesicular body. Its function is as follows. APOE is an apolipoprotein, a protein associating with lipid particles, that mainly functions in lipoprotein-mediated lipid transport between organs via the plasma and interstitial fluids. APOE is a core component of plasma lipoproteins and is involved in their production, conversion and clearance. Apolipoproteins are amphipathic molecules that interact both with lipids of the lipoprotein particle core and the aqueous environment of the plasma. As such, APOE associates with chylomicrons, chylomicron remnants, very low density lipoproteins (VLDL) and intermediate density lipoproteins (IDL) but shows a preferential binding to high-density lipoproteins (HDL). It also binds a wide range of cellular receptors including the LDL receptor/LDLR, the LDL receptor-related proteins LRP1, LRP2 and LRP8 and the very low-density lipoprotein receptor/VLDLR that mediate the cellular uptake of the APOE-containing lipoprotein particles. Finally, APOE also has a heparin-binding activity and binds heparan-sulfate proteoglycans on the surface of cells, a property that supports the capture and the receptor-mediated uptake of APOE-containing lipoproteins by cells. A main function of APOE is to mediate lipoprotein clearance through the uptake of chylomicrons, VLDLs, and HDLs by hepatocytes. APOE is also involved in the biosynthesis by the liver of VLDLs as well as their uptake by peripheral tissues ensuring the delivery of triglycerides and energy storage in muscle, heart and adipose tissues. By participating in the lipoprotein-mediated distribution of lipids among tissues, APOE plays a critical role in plasma and tissues lipid homeostasis. APOE is also involved in two steps of reverse cholesterol transport, the HDLs-mediated transport of cholesterol from peripheral tissues to the liver, and thereby plays an important role in cholesterol homeostasis. First, it is functionally associated with ABCA1 in the biogenesis of HDLs in tissues. Second, it is enriched in circulating HDLs and mediates their uptake by hepatocytes. APOE also plays an important role in lipid transport in the central nervous system, regulating neuron survival and sprouting. In Colobus guereza (Mantled guereza), this protein is Apolipoprotein E (APOE).